Consider the following 509-residue polypeptide: MQYKDLRDFISQLEQLGELRRVSTPVSPNLEMTEICDRLLRAGGPAVLFERPAGFRSPEGTYSVPVLANLFGTTHRVALGMGAQSLEDLRDIGRVLSALKEPEPPRGLREAGKLFTLAKSVWDMAPKRVSSPACQEIVWEGNDVDLARLPIQTCWPGDAAPLITWGLVVTKGPHKKRQNLGIYRQQVISRNQVIMRWLAHRGGALDFREHALANPGKPFPIAVALGADPATILGAVTPVPDTLSEYQFAGLLRGSRTALAGCLTPTLSELSVPASAEIVLEGHIQPDPDHPSGYQHALEGPYGDHTGYYNEQDWFPVFTIDRITMRRDPIYHSTYTGKPPDEPAVLGVALNEVFVPLLQKQFPEITDFYLPPEGCSYRMALVRMKKQYAGHAKRVMFGVWSFLRQFMYTKFIVVVDDDVDVRDWKEVIWAITTRVDPARDTVLVENTPIDYLDFASPVSGLGSKMGIDATDKWPGETTREWGRTISMDPAVKAKVDGMMATLFDRPAGT.

Asparagine 179 is a binding site for Mn(2+). Prenylated FMN contacts are provided by residues 182 to 184 (IYR), 196 to 198 (RWL), and 201 to 202 (RG). Glutamate 245 serves as a coordination point for Mn(2+). Catalysis depends on aspartate 304, which acts as the Proton donor.

This sequence belongs to the UbiD family. As to quaternary structure, homohexamer. Requires prenylated FMN as cofactor. It depends on Mn(2+) as a cofactor.

The protein resides in the cell membrane. The catalysed reaction is a 4-hydroxy-3-(all-trans-polyprenyl)benzoate + H(+) = a 2-(all-trans-polyprenyl)phenol + CO2. Its pathway is cofactor biosynthesis; ubiquinone biosynthesis. In terms of biological role, catalyzes the decarboxylation of 3-octaprenyl-4-hydroxy benzoate to 2-octaprenylphenol, an intermediate step in ubiquinone biosynthesis. In Cupriavidus pinatubonensis (strain JMP 134 / LMG 1197) (Cupriavidus necator (strain JMP 134)), this protein is 3-octaprenyl-4-hydroxybenzoate carboxy-lyase.